Consider the following 521-residue polypeptide: Protein PLM2 (521 aa).

The segment at 1–63 is disordered; it reads MSHLFPPSSP…SIGRQSSPVK (63 aa). A compositionally biased stretch (polar residues) spans 51–63; sequence PSSSIGRQSSPVK. The region spanning 102–156 is the FHA domain; sequence LAIGRKKSVCNIILPCRKNISRQHAFISYAADRNEIKLECNGTNGLSVHLPYSMQ. 4 positions are modified to phosphoserine: S281, S295, S302, and S384.

It belongs to the PLM2/TOS4 family. In terms of processing, phosphorylated by CDC28.

It localises to the nucleus. Binds to the promoters of genes with functions important for the G1/S (start) transition; primarily genes involved in DNA synthesis and repair, chromosome segregation, nuclear division and transcription. The polypeptide is Protein PLM2 (PLM2) (Saccharomyces cerevisiae (strain ATCC 204508 / S288c) (Baker's yeast)).